Consider the following 203-residue polypeptide: Imidazole glycerol phosphate synthase subunit HisH (203 aa).

In terms of domain architecture, Glutamine amidotransferase type-1 spans 1–203 (MIGIIDYGMG…KNFGEMIKCL (203 aa)). Catalysis depends on Cys79, which acts as the Nucleophile. Residues His181 and Glu183 contribute to the active site.

As to quaternary structure, heterodimer of HisH and HisF.

The protein localises to the cytoplasm. It carries out the reaction 5-[(5-phospho-1-deoxy-D-ribulos-1-ylimino)methylamino]-1-(5-phospho-beta-D-ribosyl)imidazole-4-carboxamide + L-glutamine = D-erythro-1-(imidazol-4-yl)glycerol 3-phosphate + 5-amino-1-(5-phospho-beta-D-ribosyl)imidazole-4-carboxamide + L-glutamate + H(+). The enzyme catalyses L-glutamine + H2O = L-glutamate + NH4(+). Its pathway is amino-acid biosynthesis; L-histidine biosynthesis; L-histidine from 5-phospho-alpha-D-ribose 1-diphosphate: step 5/9. IGPS catalyzes the conversion of PRFAR and glutamine to IGP, AICAR and glutamate. The HisH subunit catalyzes the hydrolysis of glutamine to glutamate and ammonia as part of the synthesis of IGP and AICAR. The resulting ammonia molecule is channeled to the active site of HisF. The sequence is that of Imidazole glycerol phosphate synthase subunit HisH from Caldanaerobacter subterraneus subsp. tengcongensis (strain DSM 15242 / JCM 11007 / NBRC 100824 / MB4) (Thermoanaerobacter tengcongensis).